Reading from the N-terminus, the 76-residue chain is COMM domain-containing protein 6 (76 aa).

Residues 9-76 form the COMM domain; that stretch reads KLVDFQWKLG…KDMSNMIETL (68 aa).

This sequence belongs to the COMM domain-containing protein 6 family. In terms of assembly, component of the commander complex consisting of the CCC subcomplex and the retriever subcomplex. Component of the CCC subcomplex.

In terms of biological role, scaffold protein in the commander complex that is essential for endosomal recycling of transmembrane cargos; the commander complex is composed of the CCC subcomplex and the retriever subcomplex. This is COMM domain-containing protein 6 (commd6) from Dictyostelium discoideum (Social amoeba).